Consider the following 257-residue polypeptide: Imidazole glycerol phosphate synthase subunit HisF (257 aa).

Catalysis depends on residues D11 and D130.

It belongs to the HisA/HisF family. Heterodimer of HisH and HisF.

It localises to the cytoplasm. It catalyses the reaction 5-[(5-phospho-1-deoxy-D-ribulos-1-ylimino)methylamino]-1-(5-phospho-beta-D-ribosyl)imidazole-4-carboxamide + L-glutamine = D-erythro-1-(imidazol-4-yl)glycerol 3-phosphate + 5-amino-1-(5-phospho-beta-D-ribosyl)imidazole-4-carboxamide + L-glutamate + H(+). It functions in the pathway amino-acid biosynthesis; L-histidine biosynthesis; L-histidine from 5-phospho-alpha-D-ribose 1-diphosphate: step 5/9. Functionally, IGPS catalyzes the conversion of PRFAR and glutamine to IGP, AICAR and glutamate. The HisF subunit catalyzes the cyclization activity that produces IGP and AICAR from PRFAR using the ammonia provided by the HisH subunit. This Shewanella frigidimarina (strain NCIMB 400) protein is Imidazole glycerol phosphate synthase subunit HisF.